Here is a 547-residue protein sequence, read N- to C-terminus: MFS-type transporter ungB (547 aa).

The next 14 helical transmembrane spans lie at Leu-14–Leu-34, Asp-50–Gly-70, Trp-80–Pro-100, Ile-111–Ile-131, Ile-138–Gly-158, Trp-169–Leu-189, Leu-210–Gly-230, Ser-238–Val-258, Leu-279–Leu-299, Leu-316–Val-336, Thr-343–Leu-363, Ala-366–Gly-386, Val-392–Phe-412, and Ala-475–Ala-495. The segment at Pro-503–Lys-547 is disordered. The segment covering Gly-504 to Gly-514 has biased composition (basic and acidic residues).

This sequence belongs to the major facilitator superfamily. TCR/Tet family.

It localises to the membrane. Its function is as follows. MFS-type transporter; part of the gene cluster that mediates the biosynthesis of the unguisins, gamma-aminobutyric acid (GABA)-containing fungal cyclic heptapeptides with the amino acid sequence cyclo-(D-Ala1-D-Val2-L-Phe3-D-Val4-D-Ala5-D-Trp6-GABA7) for unguisin A and cyclo-(D-Ala1-D-Val2-L-Leu3-D-Val4-D-Ala5-D-Trp6-GABA7) for unguisin B. May be involved in the secretion of unguisins. This is MFS-type transporter ungB from Aspergillus violaceofuscus (strain CBS 115571).